The chain runs to 441 residues: Fibroleukin (441 aa).

A signal peptide spans 1-15 (MKLANWCWLSSTVLA). Asn-25 is a glycosylation site (N-linked (GlcNAc...) asparagine). The stretch at 73 to 167 (SRIEEVFKEV…LEKLNLVNMN (95 aa)) forms a coiled coil. Residues 102-128 (QADDSRDPGRNGLLLPGTGAPGETGDN) are disordered. Residues Asn-179, Asn-237, Asn-265, and Asn-338 are each glycosylated (N-linked (GlcNAc...) asparagine). Positions 206-438 (VQQHLIYKDC…EVKMMIRPKH (233 aa)) constitute a Fibrinogen C-terminal domain.

Homotetramer; disulfide-linked.

The protein localises to the secreted. May play a role in physiologic lymphocyte functions at mucosal sites. This chain is Fibroleukin (FGL2), found in Bos taurus (Bovine).